Here is a 452-residue protein sequence, read N- to C-terminus: Isocitrate dehydrogenase [NADP], mitochondrial (452 aa).

A mitochondrion-targeting transit peptide spans 1-39 (MAGYLRVVRSLCRASGSRPAWAPAALTAPTSQEQPRRHY). N6-acetyllysine is present on residues Lys-45, Lys-48, Lys-67, and Lys-69. Residues Lys-80 and Lys-106 each carry the N6-acetyllysine; alternate modification. N6-succinyllysine; alternate is present on residues Lys-80 and Lys-106. NADP(+) is bound by residues 115–117 (TIT) and Arg-122. Thr-117 is a binding site for D-threo-isocitrate. Residues 134-140 (SPNGTIR) and Arg-149 each bind D-threo-isocitrate. The residue at position 155 (Lys-155) is an N6-acetyllysine. Lys-166 carries the N6-acetyllysine; alternate modification. N6-succinyllysine; alternate is present on Lys-166. D-threo-isocitrate is bound at residue Arg-172. Lys-180 and Lys-193 each carry N6-acetyllysine; alternate. An N6-succinyllysine; alternate mark is found at Lys-180 and Lys-193. The residue at position 199 (Lys-199) is an N6-acetyllysine. Residue Lys-256 is modified to N6-acetyllysine; alternate. Lys-256 bears the N6-succinyllysine; alternate mark. Residues Lys-263, Lys-272, Lys-275, and Lys-280 each carry the N6-acetyllysine modification. At Lys-282 the chain carries N6-acetyllysine; alternate. Lys-282 carries the N6-succinyllysine; alternate modification. Asp-291 is a binding site for Mn(2+). Lys-299 contributes to the NADP(+) binding site. Asp-314 contacts Mn(2+). NADP(+)-binding positions include 349 to 354 (GTVTRH) and Asn-367. At Lys-384 the chain carries N6-acetyllysine; alternate. Position 384 is an N6-succinyllysine; alternate (Lys-384). Residues Lys-400, Lys-413, and Lys-442 each carry the N6-acetyllysine modification.

Belongs to the isocitrate and isopropylmalate dehydrogenases family. Homodimer. It depends on Mg(2+) as a cofactor. Mn(2+) serves as cofactor. Acetylation at Lys-413 dramatically reduces catalytic activity. Deacetylated by SIRT3.

It localises to the mitochondrion. It catalyses the reaction D-threo-isocitrate + NADP(+) = 2-oxoglutarate + CO2 + NADPH. In terms of biological role, plays a role in intermediary metabolism and energy production. It may tightly associate or interact with the pyruvate dehydrogenase complex. The protein is Isocitrate dehydrogenase [NADP], mitochondrial (IDH2) of Homo sapiens (Human).